A 706-amino-acid chain; its full sequence is ATP-dependent zinc metalloprotease FtsH (706 aa).

Residues 1–17 are compositionally biased toward polar residues; it reads MAKNSLKPSNPYNSEPE. The disordered stretch occupies residues 1 to 20; that stretch reads MAKNSLKPSNPYNSEPETPQ. The Cytoplasmic segment spans residues 1–24; it reads MAKNSLKPSNPYNSEPETPQPRPK. The helical transmembrane segment at 25 to 45 threads the bilayer; that stretch reads LPMIYYVVVIALLIGLQLAFF. Topologically, residues 46–142 are periplasmic; that stretch reads WSGSSREIPY…RYEGSPGTTW (97 aa). Residues 88–111 are disordered; it reads GLPKQEEGNDTTRKLLPGAKTPEN. The span at 91-100 shows a compositional bias: basic and acidic residues; sequence KQEEGNDTTR. Residues 143–163 traverse the membrane as a helical segment; the sequence is ISELIQWVLPFALLFGLYFFI. Residues 164-706 are Cytoplasmic-facing; it reads FRRMGAGGPG…LRQSRNVSDN (543 aa). 239-246 serves as a coordination point for ATP; sequence GPPGTGKT. A Zn(2+)-binding site is contributed by His462. Residue Glu463 is part of the active site. Zn(2+) is bound by residues His466 and Asp539. The segment at 641 to 681 is disordered; sequence RPGGQEEDSGEVDCSKKSAENGMVAHEPETTADAESTEKVG.

In the central section; belongs to the AAA ATPase family. This sequence in the C-terminal section; belongs to the peptidase M41 family. Homohexamer. It depends on Zn(2+) as a cofactor.

It localises to the cell inner membrane. In terms of biological role, acts as a processive, ATP-dependent zinc metallopeptidase for both cytoplasmic and membrane proteins. Plays a role in the quality control of integral membrane proteins. This is ATP-dependent zinc metalloprotease FtsH from Chlorobium luteolum (strain DSM 273 / BCRC 81028 / 2530) (Pelodictyon luteolum).